Reading from the N-terminus, the 329-residue chain is NADH-quinone oxidoreductase subunit H 1 (329 aa).

The next 8 membrane-spanning stretches (helical) occupy residues 12–32 (LAKI…LVFA), 78–98 (WLFY…FAVI), 120–140 (VGLL…ALGG), 159–179 (LISY…LAGS), 191–211 (GIWF…SIAA), 242–262 (LFFV…TTFF), 270–290 (WLPP…FFIW), and 308–328 (WKVL…ILML).

It belongs to the complex I subunit 1 family. NDH-1 is composed of 14 different subunits. Subunits NuoA, H, J, K, L, M, N constitute the membrane sector of the complex.

It localises to the cell inner membrane. The enzyme catalyses a quinone + NADH + 5 H(+)(in) = a quinol + NAD(+) + 4 H(+)(out). In terms of biological role, NDH-1 shuttles electrons from NADH, via FMN and iron-sulfur (Fe-S) centers, to quinones in the respiratory chain. The immediate electron acceptor for the enzyme in this species is believed to be ubiquinone. Couples the redox reaction to proton translocation (for every two electrons transferred, four hydrogen ions are translocated across the cytoplasmic membrane), and thus conserves the redox energy in a proton gradient. This subunit may bind ubiquinone. The sequence is that of NADH-quinone oxidoreductase subunit H 1 from Geobacter metallireducens (strain ATCC 53774 / DSM 7210 / GS-15).